Here is a 559-residue protein sequence, read N- to C-terminus: Dihydroxy-acid dehydratase (559 aa).

Cysteine 49 provides a ligand contact to [2Fe-2S] cluster. Mg(2+) is bound at residue aspartate 81. Cysteine 122 serves as a coordination point for [2Fe-2S] cluster. Residues aspartate 123 and lysine 124 each coordinate Mg(2+). N6-carboxylysine is present on lysine 124. Cysteine 194 contributes to the [2Fe-2S] cluster binding site. Glutamate 446 is a binding site for Mg(2+). Catalysis depends on serine 472, which acts as the Proton acceptor.

The protein belongs to the IlvD/Edd family. Homodimer. The cofactor is [2Fe-2S] cluster. Mg(2+) serves as cofactor.

The catalysed reaction is (2R)-2,3-dihydroxy-3-methylbutanoate = 3-methyl-2-oxobutanoate + H2O. The enzyme catalyses (2R,3R)-2,3-dihydroxy-3-methylpentanoate = (S)-3-methyl-2-oxopentanoate + H2O. It functions in the pathway amino-acid biosynthesis; L-isoleucine biosynthesis; L-isoleucine from 2-oxobutanoate: step 3/4. Its pathway is amino-acid biosynthesis; L-valine biosynthesis; L-valine from pyruvate: step 3/4. Functions in the biosynthesis of branched-chain amino acids. Catalyzes the dehydration of (2R,3R)-2,3-dihydroxy-3-methylpentanoate (2,3-dihydroxy-3-methylvalerate) into 2-oxo-3-methylpentanoate (2-oxo-3-methylvalerate) and of (2R)-2,3-dihydroxy-3-methylbutanoate (2,3-dihydroxyisovalerate) into 2-oxo-3-methylbutanoate (2-oxoisovalerate), the penultimate precursor to L-isoleucine and L-valine, respectively. This chain is Dihydroxy-acid dehydratase, found in Prochlorococcus marinus subsp. pastoris (strain CCMP1986 / NIES-2087 / MED4).